The sequence spans 238 residues: MTLYIPELPINNTIFPDTSLALSDPDGLLAMGGDLSPQRIIKAYQQGIFPWFSDGQPILWWSPSQRAIIQPNLVHISSSMKKIISKNNFSLSINHAFHDVIDACAAPRGNQNETWITFDMIAAYQKLHQQGIAHSIEVWRDNKLVGGLYGVCIGSVFCGESMFSKEDNTSKIAFIALCQHFDKFKGQLIDCQILTKHLQSFGVQNESRDNFINYLNQYKNININKKCWDKQTIFIKNR.

It belongs to the L/F-transferase family.

It localises to the cytoplasm. It catalyses the reaction N-terminal L-lysyl-[protein] + L-leucyl-tRNA(Leu) = N-terminal L-leucyl-L-lysyl-[protein] + tRNA(Leu) + H(+). The catalysed reaction is N-terminal L-arginyl-[protein] + L-leucyl-tRNA(Leu) = N-terminal L-leucyl-L-arginyl-[protein] + tRNA(Leu) + H(+). The enzyme catalyses L-phenylalanyl-tRNA(Phe) + an N-terminal L-alpha-aminoacyl-[protein] = an N-terminal L-phenylalanyl-L-alpha-aminoacyl-[protein] + tRNA(Phe). Functionally, functions in the N-end rule pathway of protein degradation where it conjugates Leu, Phe and, less efficiently, Met from aminoacyl-tRNAs to the N-termini of proteins containing an N-terminal arginine or lysine. This is Leucyl/phenylalanyl-tRNA--protein transferase from Psychromonas ingrahamii (strain DSM 17664 / CCUG 51855 / 37).